The chain runs to 667 residues: Glycine--tRNA ligase beta subunit (667 aa).

It belongs to the class-II aminoacyl-tRNA synthetase family. As to quaternary structure, tetramer of two alpha and two beta subunits.

It is found in the cytoplasm. It carries out the reaction tRNA(Gly) + glycine + ATP = glycyl-tRNA(Gly) + AMP + diphosphate. The chain is Glycine--tRNA ligase beta subunit from Rickettsia canadensis (strain McKiel).